Here is a 467-residue protein sequence, read N- to C-terminus: Fumarate hydratase class II (467 aa).

Residues Ser98–Thr100, Arg126, His129–Asp132, Ser139–Asn141, and Thr187 each bind substrate. His188 (proton donor/acceptor) is an active-site residue. Ser318 is an active-site residue. Substrate is bound by residues Ser319 and Lys324–Asn326.

Belongs to the class-II fumarase/aspartase family. Fumarase subfamily. As to quaternary structure, homotetramer.

It is found in the cytoplasm. It carries out the reaction (S)-malate = fumarate + H2O. It functions in the pathway carbohydrate metabolism; tricarboxylic acid cycle; (S)-malate from fumarate: step 1/1. Functionally, involved in the TCA cycle. Catalyzes the stereospecific interconversion of fumarate to L-malate. The chain is Fumarate hydratase class II from Escherichia coli O6:H1 (strain CFT073 / ATCC 700928 / UPEC).